The primary structure comprises 306 residues: Bifunctional protein FolD (306 aa).

Residues 169–171, Ser194, and Ile235 contribute to the NADP(+) site; that span reads GRS.

Belongs to the tetrahydrofolate dehydrogenase/cyclohydrolase family. Homodimer.

The enzyme catalyses (6R)-5,10-methylene-5,6,7,8-tetrahydrofolate + NADP(+) = (6R)-5,10-methenyltetrahydrofolate + NADPH. It carries out the reaction (6R)-5,10-methenyltetrahydrofolate + H2O = (6R)-10-formyltetrahydrofolate + H(+). Its pathway is one-carbon metabolism; tetrahydrofolate interconversion. Functionally, catalyzes the oxidation of 5,10-methylenetetrahydrofolate to 5,10-methenyltetrahydrofolate and then the hydrolysis of 5,10-methenyltetrahydrofolate to 10-formyltetrahydrofolate. This Thermosynechococcus vestitus (strain NIES-2133 / IAM M-273 / BP-1) protein is Bifunctional protein FolD.